Consider the following 54-residue polypeptide: Ovomucoid (54 aa).

The region spanning 4 to 54 (VDCSGYPTHACTLELKPLCGSDNQTYSNKCGFCNAVAQSNGTLTLSHFGKC) is the Kazal-like domain. 3 disulfides stabilise this stretch: cysteine 6-cysteine 36, cysteine 14-cysteine 33, and cysteine 22-cysteine 54. Asparagine 43 carries an N-linked (GlcNAc...) asparagine glycan.

It localises to the secreted. The sequence is that of Ovomucoid from Leipoa ocellata (Malleefowl).